The chain runs to 425 residues: UPF0761 membrane protein xcc-b100_3490 (425 aa).

6 consecutive transmembrane segments (helical) span residues 48–68, 105–125, 154–174, 182–202, 216–236, and 250–270; these read VFAL…FPAF, FTVA…HSIE, GTML…LPLF, LAEF…IVLI, ALPG…GFGF, and ALSA…SVLL.

Belongs to the UPF0761 family.

It localises to the cell inner membrane. This Xanthomonas campestris pv. campestris (strain B100) protein is UPF0761 membrane protein xcc-b100_3490.